Here is a 400-residue protein sequence, read N- to C-terminus: GDNF family receptor alpha-3 (400 aa).

A signal peptide spans 1-31 (MVRPLNPRPLPPVVLMLLLLLPPSPLPLAAG). A disulfide bridge links Cys51 with Cys57. N-linked (GlcNAc...) asparagine glycosylation is found at Asn95 and Asn148. Disulfide bonds link Cys162-Cys218, Cys169-Cys175, Cys186-Cys196, Cys191-Cys239, Cys220-Cys227, Cys248-Cys316, Cys255-Cys261, Cys272-Cys288, Cys281-Cys340, and Cys318-Cys328. Asn309 carries N-linked (GlcNAc...) asparagine glycosylation. Asn374 is lipidated: GPI-anchor amidated asparagine. The propeptide at 375–400 (PAVRPQPWVPSLFSCTLPLILLLSLW) is removed in mature form.

It belongs to the GDNFR family. As to quaternary structure, interacts with ARTN ligand and RET: forms a 2:2:2 ternary complex composed of ARTN ligand, GFRA3 and RET receptor. Interacts with SORL1. Post-translationally, N-glycosylated. Widely expressed in adult and fetus which exhibit a similar pattern. Essentially not expressed in the central nervous system, but highly expressed in several sensory and sympathetic ganglia of the peripheral nervous system. Moderate expression in many non-neuronal tissues, particularly those of the digestive and urogenital systems, but high expression in stomach and appendix. Several types of glandular tissues show low expression. Very low or no expression detected in the hematopoietic system.

It is found in the cell membrane. Its function is as follows. Receptor for artemin (ARTN), a growth factor that supports the survival of sensory and sympathetic peripheral neurons. ARTN-binding leads to autophosphorylation and activation of the RET receptor. The polypeptide is GDNF family receptor alpha-3 (GFRA3) (Homo sapiens (Human)).